The sequence spans 199 residues: Transgelin-2 (199 aa).

Alanine 2 carries the post-translational modification N-acetylalanine. Phosphoserine is present on serine 11. 2 positions are modified to N6-acetyllysine: lysine 17 and lysine 20. One can recognise a Calponin-homology (CH) domain in the interval 24–136 (ADLEQILIQW…RTLMNLGGLA (113 aa)). A Phosphoserine modification is found at serine 163. A Glycyl lysine isopeptide (Lys-Gly) (interchain with G-Cter in SUMO2) cross-link involves residue lysine 171. Residues 174 to 199 (IGLQMGTNRGASQAGMTGYGMPRQIL) form a Calponin-like repeat. Phosphothreonine is present on threonine 180. Arginine 182 and arginine 196 each carry omega-N-methylarginine.

The protein belongs to the calponin family.

The protein is Transgelin-2 (TAGLN2) of Bos taurus (Bovine).